The following is a 243-amino-acid chain: Pyridoxine 5'-phosphate synthase (243 aa).

Residue Asn-9 participates in 3-amino-2-oxopropyl phosphate binding. 11 to 12 is a 1-deoxy-D-xylulose 5-phosphate binding site; the sequence is DH. Residue Arg-20 participates in 3-amino-2-oxopropyl phosphate binding. The Proton acceptor role is filled by His-45. Positions 47 and 52 each coordinate 1-deoxy-D-xylulose 5-phosphate. Glu-72 functions as the Proton acceptor in the catalytic mechanism. A 1-deoxy-D-xylulose 5-phosphate-binding site is contributed by Thr-102. Catalysis depends on His-193, which acts as the Proton donor. 3-amino-2-oxopropyl phosphate contacts are provided by residues Gly-194 and 215-216; that span reads GH.

Belongs to the PNP synthase family. As to quaternary structure, homooctamer; tetramer of dimers.

It localises to the cytoplasm. The enzyme catalyses 3-amino-2-oxopropyl phosphate + 1-deoxy-D-xylulose 5-phosphate = pyridoxine 5'-phosphate + phosphate + 2 H2O + H(+). It participates in cofactor biosynthesis; pyridoxine 5'-phosphate biosynthesis; pyridoxine 5'-phosphate from D-erythrose 4-phosphate: step 5/5. In terms of biological role, catalyzes the complicated ring closure reaction between the two acyclic compounds 1-deoxy-D-xylulose-5-phosphate (DXP) and 3-amino-2-oxopropyl phosphate (1-amino-acetone-3-phosphate or AAP) to form pyridoxine 5'-phosphate (PNP) and inorganic phosphate. The protein is Pyridoxine 5'-phosphate synthase of Shigella boydii serotype 4 (strain Sb227).